The following is a 450-amino-acid chain: Tubulin alpha chain (450 aa).

Glutamine 11 provides a ligand contact to GTP. An N6-acetyllysine modification is found at lysine 40. GTP-binding residues include glutamate 71, serine 140, glycine 144, threonine 145, threonine 179, asparagine 206, and asparagine 228. A Mg(2+)-binding site is contributed by glutamate 71. The active site involves glutamate 254.

Belongs to the tubulin family. Dimer of alpha and beta chains. A typical microtubule is a hollow water-filled tube with an outer diameter of 25 nm and an inner diameter of 15 nM. Alpha-beta heterodimers associate head-to-tail to form protofilaments running lengthwise along the microtubule wall with the beta-tubulin subunit facing the microtubule plus end conferring a structural polarity. Microtubules usually have 13 protofilaments but different protofilament numbers can be found in some organisms and specialized cells. Mg(2+) serves as cofactor. Acetylation of alpha chains at Lys-40 stabilizes microtubules and affects affinity and processivity of microtubule motors. This modification has a role in multiple cellular functions, ranging from cell motility, cell cycle progression or cell differentiation to intracellular trafficking and signaling.

The protein localises to the cytoplasm. Its subcellular location is the cytoskeleton. It carries out the reaction GTP + H2O = GDP + phosphate + H(+). Functionally, tubulin is the major constituent of microtubules, a cylinder consisting of laterally associated linear protofilaments composed of alpha- and beta-tubulin heterodimers. Microtubules grow by the addition of GTP-tubulin dimers to the microtubule end, where a stabilizing cap forms. Below the cap, tubulin dimers are in GDP-bound state, owing to GTPase activity of alpha-tubulin. In Oxytricha granulifera (Ciliate), this protein is Tubulin alpha chain.